The chain runs to 693 residues: MENMAEEELLPLEKEEVEVAQVQVQVPSLASAPEEAKSKRHISIQRQLADLEKLAFVTEGNFDSTSSLNSDNLDAGNRQACPLCPKEKFRACNSHKLRRHLQNLHWKVSVEFEGYRMCICHLPCRPVKPNIIGEQISSKMGAHYHCIICSATITRRTDMLGHVRRHMNKGETKSSYIAASTAKPPKEILKEADTDVQVCPNYSIPQKTDSYFNPKMKLNRQLIFCTLAALAEERKPLECLDAFGATGIMGLQWAKHLGNAVKVTINDLNENSVTLIQENCYLNKLKVVVDSKEKEKSDDILEEGEKNIGNIKVTKMDANVLMHLRSFDFIHLDPFGTSVNYLDSAFRNIRNLGIVSVTSTDISSLYAKAQHVARRHYGCNIVRTEYYKELAARIVVAAVARAAARCNKGIEVLFAVALEHFVLVVVRVLRGPTSADETAKKIQYLIHCQWCEERIFQKDGNMVEENPYRQLPCNCHGSMPGKTAIELGPLWSSSLFNTGFLKRMLFESLHHGLDDIQTLIKTLIFESECTPQSQFSIHTPSNLNKQEENGVFIKTTDDTITDNYIAQGKRKSNEMITNLGKKQKTDVSTEHPPFYYNIHRHSIKGMNMPKLKKFLCYLSQAGFRVSRTHFDPMGVRTDAPLMQFKSILLKYSTPTYTGGQSESLVQSASEDTVTERVEMSVNDKAEASGCRRW.

Positions 95–99 (HKLRR) match the Nucleolar localization signal motif. The C2H2-type zinc-finger motif lies at 144 to 166 (YHCIICSATITRRTDMLGHVRRH). The Trm1 methyltransferase domain maps to 187 to 648 (EILKEADTDV…APLMQFKSIL (462 aa)). S-adenosyl-L-methionine contacts are provided by Arg-220, Asp-267, Asp-317, and Ala-318. Zn(2+)-binding residues include Cys-448, Cys-451, Cys-473, and Cys-475. Lys-545 participates in a covalent cross-link: Glycyl lysine isopeptide (Lys-Gly) (interchain with G-Cter in SUMO2). Phosphoserine occurs at positions 572 and 667.

The protein belongs to the class I-like SAM-binding methyltransferase superfamily. Trm1 family.

Its subcellular location is the nucleus. It localises to the nucleolus. It catalyses the reaction guanosine(27) in tRNA(Tyr) + 2 S-adenosyl-L-methionine = N(2)-dimethylguanosine(27) in tRNA(Tyr) + 2 S-adenosyl-L-homocysteine + 2 H(+). In terms of biological role, specifically dimethylates a single guanine residue at position 27 of tRNA(Tyr) using S-adenosyl-L-methionine as donor of the methyl groups. Dimethylation at position 27 of tRNA(Tyr) is required for efficient translation of tyrosine codons. Also required to maintain 3-(3-amino-3-carboxypropyl)uridine (acp3U) in the D-loop of several cytoplasmic tRNAs. This chain is tRNA (guanine(27)-N(2))-dimethyltransferase (TRMT1L), found in Macaca fascicularis (Crab-eating macaque).